The sequence spans 629 residues: tRNA uridine 5-carboxymethylaminomethyl modification enzyme MnmG (629 aa).

Residue 13-18 coordinates FAD; sequence GGGHAG. 273–287 is a binding site for NAD(+); it reads GPRYCPSIEDKVVRF.

This sequence belongs to the MnmG family. In terms of assembly, homodimer. Heterotetramer of two MnmE and two MnmG subunits. FAD is required as a cofactor.

It localises to the cytoplasm. In terms of biological role, NAD-binding protein involved in the addition of a carboxymethylaminomethyl (cmnm) group at the wobble position (U34) of certain tRNAs, forming tRNA-cmnm(5)s(2)U34. The protein is tRNA uridine 5-carboxymethylaminomethyl modification enzyme MnmG of Alkalilimnicola ehrlichii (strain ATCC BAA-1101 / DSM 17681 / MLHE-1).